Here is a 55-residue protein sequence, read N- to C-terminus: Large ribosomal subunit protein bL33 (55 aa).

This sequence belongs to the bacterial ribosomal protein bL33 family.

The protein is Large ribosomal subunit protein bL33 of Alcanivorax borkumensis (strain ATCC 700651 / DSM 11573 / NCIMB 13689 / SK2).